Consider the following 96-residue polypeptide: Histone-like protein p6 (96 aa).

A DNA-binding region spans residues 1-19 (MAKMMQREITKTTVNVAKM).

The protein belongs to the phi29likevirus histone-like protein p6 family. In terms of assembly, homodimer. Homomultimer. Binds to double-stranded DNA giving rise to multimeric nucleoprotein complexes. Binding specificity for the viral DNA is based on supercoiling, the viral genome having a negative superhelicity lower than that of plasmid DNA. Interacts with the DNA replication protein p17; this interaction optimizes the binding of protein p6 at the viral DNA ends, thus favoring the initiation of replication.

Functionally, histone-like nucleoprotein that binds to the viral dsDNA and responsible for wrapping and compacting the viral DNA about 4-fold. Forms a nucleoprotein complex in which the DNA adopts a right-handed toroidal conformation winding around a protein core. Binds ito most, if not all, the viral genome, although with different affinity, the highest one corresponding to the genome ends. The formation of the nucleoprotein complex at the genome ends, activates the initiation of viral DNA replication. The binding of p6 would recruit the complex formed by the TP and the DNA polymerase to the origin. Protein p6 also represses early transcription from promoter C2, and, together with protein p4, represses transcription from promoters A2b and A2c and activates late transcription from promoter A3. Protein p6 is therefore involved in the early to late transcription switch. The formation of the nucleoprotein complex at the right end of the phage genome where the early promoter C2 is located affects local topology, which may contribute to the promoter repression. In Bacillus phage PZA (Bacteriophage PZA), this protein is Histone-like protein p6 (6).